A 469-amino-acid polypeptide reads, in one-letter code: Cysteine protease ATG4 (469 aa).

Residues Lys48–Ser99 form a disordered region. A compositionally biased stretch (basic and acidic residues) spans Ala66–Asp75. Pro residues predominate over residues Pro79–Pro90. Cys172 functions as the Nucleophile in the catalytic mechanism. Catalysis depends on residues Asp362 and His364. Positions Gly443 to Ala469 are disordered. The segment covering Ile452 to Thr463 has biased composition (acidic residues).

It belongs to the peptidase C54 family. As to quaternary structure, interacts with ATG8.

The protein resides in the cytoplasm. The protein localises to the nucleus. It localises to the preautophagosomal structure. It catalyses the reaction [protein]-C-terminal L-amino acid-glycyl-phosphatidylethanolamide + H2O = [protein]-C-terminal L-amino acid-glycine + a 1,2-diacyl-sn-glycero-3-phosphoethanolamine. In terms of biological role, cysteine protease that plays a key role in cytoplasm to vacuole transport (Cvt) and autophagy by mediating both proteolytic activation and delipidation of ATG8. Required for selective autophagic degradation of the nucleus (nucleophagy) as well as for mitophagy which contributes to regulate mitochondrial quantity and quality by eliminating the mitochondria to a basal level to fulfill cellular energy requirements and preventing excess ROS production. The protease activity is required for proteolytic activation of ATG8: cleaves the C-terminal amino acid of ATG8 to reveal a C-terminal glycine. ATG8 ubiquitin-like activity requires the exposure of the glycine at the C-terminus for its conjugation to phosphatidylethanolamine (PE) and its insertion to membranes, which is necessary for autophagy. The ATG8-PE conjugate mediates tethering between adjacent membranes and stimulates membrane hemifusion, leading to expansion of the autophagosomal membrane during autophagy. In addition to the protease activity, also catalyzes deconjugation of PE-conjugated forms of ATG8 during macroautophagy: ATG8 delipidation is required to release the protein from membranes, which facilitates multiple events during macroautophagy, and especially for efficient autophagosome biogenesis, the assembly of ATG9-containing tubulovesicular clusters into phagophores/autophagosomes, and for the disassembly of PAS-associated ATG components. ATG8 delipidation by ATG4 also recycles ATG8-PE generated on inappropriate membranes to maintain a reservoir of unlipidated ATG8 that is required for autophagosome formation at the PAS. Autophagy is required for proper vegetative growth, asexual/sexual reproduction, and full virulence. Autophagy is particularly involved in the biosynthesis of deoxynivalenol (DON), an important virulence determinant. The polypeptide is Cysteine protease ATG4 (Gibberella zeae (strain ATCC MYA-4620 / CBS 123657 / FGSC 9075 / NRRL 31084 / PH-1) (Wheat head blight fungus)).